Consider the following 291-residue polypeptide: MKKAILIDGNSLAYRAYFATWKQVEYAKQNNLPFNNAIRTMLLMCWNLIKANVYQYGIVSFDTKAPTFRDQIYEGYKQKRVKTPVELLVQIPLIKQALVYLGFLVCEKDGFEADDLIGSYANLFTKQEITVDIYSSDRDMLQLVNAFTNVFLCIKGTKEMVMYNNENFKSLFYGLAPYQVVEYKGLVGDNSDNLAGIKGIGPIKGIELLQQYGTIDNIYTNFNNLPNQLQKLLNNQKEIAKTFSFLAKIKTDIELDQNIDLTGLKPIQKQALIQLLSENKINTLVEKFSKI.

One can recognise a 5'-3' exonuclease domain in the interval 176–269 (APYQVVEYKG…DLTGLKPIQK (94 aa)).

5'-3' exonuclease acting preferentially on double-stranded DNA. In Mycoplasma genitalium (strain ATCC 33530 / DSM 19775 / NCTC 10195 / G37) (Mycoplasmoides genitalium), this protein is 5'-3' exonuclease (polA).